The following is a 212-amino-acid chain: Adenylate kinase (212 aa).

Residue 10 to 15 (GAGKGT) participates in ATP binding. Positions 30 to 59 (STGDILREAMAQETELGQKAKSYIDAGELV) are NMP. AMP is bound by residues threonine 31, arginine 36, 57-59 (ELV), 84-87 (GYPR), and glutamine 91. The tract at residues 125-158 (RRRVHEETGETYHLDHDPPPEDVDPDLIVQRSDD) is LID. ATP-binding positions include arginine 126 and 135-136 (TY). Positions 155 and 166 each coordinate AMP. ATP is bound at residue glycine 194.

It belongs to the adenylate kinase family. As to quaternary structure, monomer.

The protein resides in the cytoplasm. The enzyme catalyses AMP + ATP = 2 ADP. It functions in the pathway purine metabolism; AMP biosynthesis via salvage pathway; AMP from ADP: step 1/1. Its function is as follows. Catalyzes the reversible transfer of the terminal phosphate group between ATP and AMP. Plays an important role in cellular energy homeostasis and in adenine nucleotide metabolism. The chain is Adenylate kinase from Salinibacter ruber (strain DSM 13855 / M31).